Consider the following 2546-residue polypeptide: Formin-J (2546 aa).

Disordered regions lie at residues 1-40 (MEEN…SFVK), 61-108 (ENSN…PLSE), 188-270 (KNIT…PNSA), 369-414 (TTNN…SSSS), 502-541 (TNSF…TPNS), 802-849 (SSIS…NTRK), 879-898 (TSVP…NNNN), 987-1101 (TTNN…GGIG), 1485-1529 (PKSK…ASLS), 1558-1601 (KRSK…FKSP), 1659-1775 (INNI…KVNS), 1840-1869 (VPTT…ETQS), and 2014-2033 (SNLS…SSLE). 2 stretches are compositionally biased toward low complexity: residues 16-37 (NNNE…SSSS) and 62-98 (NSNN…NSTS). Polar residues-rich tracts occupy residues 99–108 (GSKDNTPLSE) and 188–198 (KNITPSKNNSP). Composition is skewed to low complexity over residues 203–237 (NNNN…NNNN) and 247–270 (NKNS…PNSA). The segment covering 377 to 389 (AESLTTYSESSEI) has biased composition (polar residues). Low complexity-rich tracts occupy residues 390-414 (STDS…SSSS) and 502-513 (TNSFGSSTTTTI). Residues 391-444 (TDSTGVCSSSSSTSSTLSSKSSSSSSFNKFMEFLLIYIEDNDSTNGTWVNGNKL) form the FHA domain. Residues 457–963 (KITLSTPDFS…SSISNEQEYQ (507 aa)) form the GBD/FH3 domain. Polar residues-rich tracts occupy residues 879 to 891 (TSVP…KNPL) and 992 to 1007 (SSAK…NKSP). Pro residues predominate over residues 1033–1042 (VPPPPPPPPG). Positions 1043–1056 (GNNNNESDVPSSSG) are enriched in low complexity. Residues 1057–1097 (GPPPPPPPPPPPGKSSGGGPPPPPPPPPKGGKGGPPPPPPI) show a composition bias toward pro residues. Positions 1072–1098 (SGGGPPPPPPPPPKGGKGGPPPPPPIG) constitute an FH1 domain. In terms of domain architecture, FH2 spans 1106 to 1495 (KVKEEQPSVP…KSKKYQEQQN (390 aa)). The span at 1492–1502 (EQQNKPTQNND) shows a compositional bias: polar residues. A compositionally biased stretch (low complexity) spans 1507–1529 (SKLSNLPSSSSINDESSSSASLS). Residues 1563–1593 (EQEPVVEPIQITPKVGSAASAEPSPSIKSRD) form the DAD domain. Residues 1665–1679 (SSSSSSSSSSSSSSS) are compositionally biased toward low complexity. Residues 1687–1717 (HNTESEIKKEFISNSSMDKDKEKIKEKEKGT) are compositionally biased toward basic and acidic residues. The segment covering 1732–1745 (KSTTTSPSSSSSKK) has biased composition (low complexity). The segment covering 1746–1757 (QIPSLSECLQES) has biased composition (polar residues). 2 stretches are compositionally biased toward low complexity: residues 1763-1775 (RSSS…KVNS) and 1841-1853 (PTTT…TTQT). The stretch at 2067-2118 (IDDNQQKQQKQQQQQQQQQQQQQQLPQPQQQQQQQQQQQQQQQQQQQQQQQQ) forms a coiled coil. Over residues 2121 to 2154 (QQSTTTTTISTHHPQLKQVQPQSPSSLSQQPTQQ) the composition is skewed to low complexity. Disordered stretches follow at residues 2121–2369 (QQST…PKTV), 2381–2473 (SHKK…SYSS), and 2485–2510 (SPSS…LKTP). Residues 2160 to 2179 (QPSSPLQSHYKPQQKPQTTY) are compositionally biased toward polar residues. Composition is skewed to low complexity over residues 2188 to 2206 (ANPF…SNAS) and 2237 to 2256 (SSAS…TPLS). The span at 2274–2287 (TPPSSSISNSTATT) shows a compositional bias: polar residues. Over residues 2302–2315 (SPSSSSLEQSSNAS) the composition is skewed to low complexity. Basic residues predominate over residues 2332–2342 (FKKHKKSHSKS). 3 stretches are compositionally biased toward low complexity: residues 2388–2439 (VDQS…SSSS), 2459–2473 (NISS…SYSS), and 2485–2497 (SPSS…KPSP). Positions 2499-2508 (AVSSTSSTLK) are enriched in polar residues.

It belongs to the formin homology family. Diaphanous subfamily. Interacts (via GBD/FH3 domain) with activated Rho-GTPases.

Its function is as follows. Formins play an important role in the nucleation of actin and the formation of linear actin filaments. The protein is Formin-J (forJ) of Dictyostelium discoideum (Social amoeba).